Consider the following 548-residue polypeptide: MDDYEKSKVLTKRYKKLKKLLKMVYGYDNFRPRQYEIINKVINGEDVCAILMTSAGKSLCFQIPALYLDKPAIIISPLISLMEDQRLILEKLGISSCCYNSNVENKAQMRKDIMQFKYKFIYVSPESVVHLKDLIVKLEDFQGISLIAIDEAHCISAYGFDFRTAYREITFFKEILPNVPILALTATATNIVAKDICKVLQLKTNEPIKASFDRPNLYLEVRTKSKNPANDIVPIINKYPNQSVIIYCLTKKETQKIADILTVHKVVCGIYHAGLSNEHKTKTHTNFINNKIKIVVATIAFGMGINKPDVRVVIHYGAPKNIEGYYQEIGRAGRDGEKSYCYAFYNFQDFMIQRRFISQNNNPNYQKTQLALLEQMKKYVTLRTCRRKILLEYFDEETKEKCDFCDNCCGVHKNIVNENVTSKQNVQSEAKLIIELIESIPNRNFGVNMYINILRGSKNKAISPAIRKNKYYGLGSKHSSEWWKEVFDNLIKQGFLQSVSLKTGKFPIQVVKVTNKGVTWVSMADLGSLLDNIDNSVKLDPVEMVASV.

The region spanning 38–206 (INKVINGEDV…CKVLQLKTNE (169 aa)) is the Helicase ATP-binding domain. 51–58 (LMTSAGKS) contributes to the ATP binding site. The DEAH box motif lies at 150–153 (DEAH). The Helicase C-terminal domain occupies 231-376 (DIVPIINKYP…KTQLALLEQM (146 aa)).

It belongs to the DEAD box helicase family. DEAH subfamily.

The catalysed reaction is ATP + H2O = ADP + phosphate + H(+). The polypeptide is Putative ATP-dependent RNA helicase R290 (Acanthamoeba polyphaga mimivirus (APMV)).